Consider the following 337-residue polypeptide: tRNA dimethylallyltransferase (337 aa).

24-31 (GPTGAGKT) is an ATP binding site. 26–31 (TGAGKT) lines the substrate pocket. 2 interaction with substrate tRNA regions span residues 49–52 (DSRQ) and 188–192 (QRAVR).

It belongs to the IPP transferase family. As to quaternary structure, monomer. Requires Mg(2+) as cofactor.

It catalyses the reaction adenosine(37) in tRNA + dimethylallyl diphosphate = N(6)-dimethylallyladenosine(37) in tRNA + diphosphate. Its function is as follows. Catalyzes the transfer of a dimethylallyl group onto the adenine at position 37 in tRNAs that read codons beginning with uridine, leading to the formation of N6-(dimethylallyl)adenosine (i(6)A). This is tRNA dimethylallyltransferase from Nitratidesulfovibrio vulgaris (strain DSM 19637 / Miyazaki F) (Desulfovibrio vulgaris).